The primary structure comprises 282 residues: Putative hydrolase Bamb_4846 (282 aa).

Mg(2+)-binding residues include E124, E126, and D155.

It belongs to the FAH family. Mg(2+) is required as a cofactor.

This is Putative hydrolase Bamb_4846 from Burkholderia ambifaria (strain ATCC BAA-244 / DSM 16087 / CCUG 44356 / LMG 19182 / AMMD) (Burkholderia cepacia (strain AMMD)).